A 390-amino-acid polypeptide reads, in one-letter code: Precorrin-6Y C(5,15)-methyltransferase [decarboxylating] (390 aa).

Belongs to the precorrin methyltransferase family.

It carries out the reaction precorrin-6B + 2 S-adenosyl-L-methionine = precorrin-8X + 2 S-adenosyl-L-homocysteine + CO2 + 3 H(+). It functions in the pathway cofactor biosynthesis; adenosylcobalamin biosynthesis; cob(II)yrinate a,c-diamide from precorrin-2 (aerobic route): step 7/10. Functionally, catalyzes the methylation of both C-5 and C-15 in precorrin-6Y to form precorrin-8X. In Mycobacterium tuberculosis (strain CDC 1551 / Oshkosh), this protein is Precorrin-6Y C(5,15)-methyltransferase [decarboxylating] (cobL).